The following is a 286-amino-acid chain: GTP cyclohydrolase MptA (286 aa).

The protein belongs to the GTP cyclohydrolase IV family. As to quaternary structure, homodimer. Requires Fe(2+) as cofactor.

It catalyses the reaction GTP + H2O = 7,8-dihydroneopterin 2',3'-cyclic phosphate + formate + diphosphate + H(+). It functions in the pathway cofactor biosynthesis; 5,6,7,8-tetrahydromethanopterin biosynthesis. Its function is as follows. Converts GTP to 7,8-dihydro-D-neopterin 2',3'-cyclic phosphate, the first intermediate in the biosynthesis of coenzyme methanopterin. This Thermoplasma acidophilum (strain ATCC 25905 / DSM 1728 / JCM 9062 / NBRC 15155 / AMRC-C165) protein is GTP cyclohydrolase MptA.